The sequence spans 142 residues: gSG7 salivary protein (142 aa).

The first 25 residues, 1 to 25 (METKLVLALIACGVICLLQTTPTEA), serve as a signal peptide directing secretion. 2 cysteine pairs are disulfide-bonded: Cys83/Cys138 and Cys106/Cys116.

As to quaternary structure, interacts with host coagulation factor XII (F12) (inactive and activated). Interacts with host high molecular weight kininogen (KNG1) (inactive and activated).

It localises to the secreted. Zn(2+) modulates binding to host coagulation factor XII (F12) and high molecular weight kininogen (KNG1). Salivary protein with anticoagulant activity. Inhibits activation of host kallikrein-kinin system by preventing the reciprocal activation of coagulation factor XII (F12) and prekallikrein (KLKB1), and subsequent release of bradykinin. Inhibits host factor XII and high molecular weight kininogen (KNG1) binding to negatively charged surfaces. Weakly inhibits the alternative pathway of complement system activation in the host. The chain is gSG7 salivary protein from Anopheles stephensi (Indo-Pakistan malaria mosquito).